Consider the following 660-residue polypeptide: Bifunctional polymyxin resistance protein ArnA (660 aa).

The interval 1–304 (MKTVVFAYHD…TLGLVQGSRL (304 aa)) is formyltransferase ArnAFT. 86–88 (HLI) is a (6R)-10-formyltetrahydrofolate binding site. His104 (proton donor; for formyltransferase activity) is an active-site residue. Residues Arg114 and 136–140 (VKRAD) each bind (6R)-10-formyltetrahydrofolate. The interval 314–660 (RRTRVLILGV…RTVDLTDKPS (347 aa)) is dehydrogenase ArnADH. NAD(+)-binding positions include Asp347 and 368 to 369 (DI). Residues Ala393, Tyr398, and 432–433 (TS) contribute to the UDP-alpha-D-glucuronate site. Glu434 acts as the Proton acceptor; for decarboxylase activity in catalysis. Residues Arg460, Asn492, 526–535 (KLIDGGKQKR), and Tyr613 each bind UDP-alpha-D-glucuronate. The Proton donor; for decarboxylase activity role is filled by Arg619.

In the N-terminal section; belongs to the Fmt family. UDP-L-Ara4N formyltransferase subfamily. This sequence in the C-terminal section; belongs to the NAD(P)-dependent epimerase/dehydratase family. UDP-glucuronic acid decarboxylase subfamily. As to quaternary structure, homohexamer, formed by a dimer of trimers.

The enzyme catalyses UDP-alpha-D-glucuronate + NAD(+) = UDP-beta-L-threo-pentopyranos-4-ulose + CO2 + NADH. The catalysed reaction is UDP-4-amino-4-deoxy-beta-L-arabinose + (6R)-10-formyltetrahydrofolate = UDP-4-deoxy-4-formamido-beta-L-arabinose + (6S)-5,6,7,8-tetrahydrofolate + H(+). It functions in the pathway nucleotide-sugar biosynthesis; UDP-4-deoxy-4-formamido-beta-L-arabinose biosynthesis; UDP-4-deoxy-4-formamido-beta-L-arabinose from UDP-alpha-D-glucuronate: step 1/3. Its pathway is nucleotide-sugar biosynthesis; UDP-4-deoxy-4-formamido-beta-L-arabinose biosynthesis; UDP-4-deoxy-4-formamido-beta-L-arabinose from UDP-alpha-D-glucuronate: step 3/3. It participates in bacterial outer membrane biogenesis; lipopolysaccharide biosynthesis. Bifunctional enzyme that catalyzes the oxidative decarboxylation of UDP-glucuronic acid (UDP-GlcUA) to UDP-4-keto-arabinose (UDP-Ara4O) and the addition of a formyl group to UDP-4-amino-4-deoxy-L-arabinose (UDP-L-Ara4N) to form UDP-L-4-formamido-arabinose (UDP-L-Ara4FN). The modified arabinose is attached to lipid A and is required for resistance to polymyxin and cationic antimicrobial peptides. The chain is Bifunctional polymyxin resistance protein ArnA from Escherichia coli O1:K1 / APEC.